The primary structure comprises 184 residues: Ribosome-recycling factor (184 aa).

The protein belongs to the RRF family.

The protein localises to the cytoplasm. In terms of biological role, responsible for the release of ribosomes from messenger RNA at the termination of protein biosynthesis. May increase the efficiency of translation by recycling ribosomes from one round of translation to another. This Desulfotalea psychrophila (strain LSv54 / DSM 12343) protein is Ribosome-recycling factor.